The primary structure comprises 382 residues: MLDGLKMEENFQSAIETSASFSSLLGRAVSPKSVCEGCQRVISDRFLLRLNDSFWHEQCVQCASCKEPLETTCFYRDKKLYCKYHYEKLFAVKCGGCFEAIAPNEFVMRAQKSVYHLSCFCCCVCERQLQKGDEFVLKEGQLLCKGDYEKERELLSLVSPAASDSGKSDDEESLCKSAHGAGKGASEDGKDHKRPKRPRTILTTQQRRAFKASFEVSSKPCRKVRETLAAETGLSVRVVQVWFQNQRAKMKKLARRQQQQQQDQQNTQRLTSAQTNGSGNAGMEGIMNPYTTLPTPQQLLAIEQSVYNSDPFRQGLTPPQMPGDHMHPYGAEPLFHDLDSDDTSLSNLGDCFLATSEAGPLQSRVGNPIDHLYSMQNSYFTS.

LIM zinc-binding domains are found at residues 33–92 (SVCE…LFAV) and 92–154 (VKCG…EREL). Disordered stretches follow at residues 161-208 (AASD…QQRR) and 252-286 (KLARRQQQQQQDQQNTQRLTSAQTNGSGNAGMEGI). The segment at residues 195–254 (PKRPRTILTTQQRRAFKASFEVSSKPCRKVRETLAAETGLSVRVVQVWFQNQRAKMKKLA) is a DNA-binding region (homeobox). Over residues 256–269 (RQQQQQQDQQNTQR) the composition is skewed to low complexity.

It localises to the nucleus. Its function is as follows. Acts as a transcriptional activator by binding to an A/T-rich sequence, the FLAT element, in the insulin gene promoter. Required for development of the roof plate and, in turn, for specification of dorsal cell fates in the CNS and developing vertebrae. This Mus musculus (Mouse) protein is LIM homeobox transcription factor 1-alpha (Lmx1a).